We begin with the raw amino-acid sequence, 173 residues long: Sporulation-specific protein 12 (173 aa).

A compositionally biased stretch (polar residues) spans 1–12; sequence MSNKASDQSART. Positions 1 to 56 are disordered; it reads MSNKASDQSARTASILKTDITRENTITRSSSSNNDNYHHHNNINNYNESAKTGEDA. Position 2 is an N-acetylserine (Ser-2). Phosphoserine is present on residues Ser-118 and Ser-125. The tract at residues 159-173 is negative-charged tail; sequence DSEDVEIDEDEEYFY.

Functionally, it is required for meiosis I chromosome division during sporulation. A component of the FEAR (CDC14 early anaphase release) network which promotes CDC14 release from the nucleolus during early anaphase. This is Sporulation-specific protein 12 (SPO12) from Saccharomyces cerevisiae (strain ATCC 204508 / S288c) (Baker's yeast).